The chain runs to 315 residues: MAPENFTRVTEFILTGVSSCPELQIPLFLVFLVLYVLTMAGNLGIITLTSVDSRLQNPMYFFLRHLAIINLGNSTVIAPKMLMNFLVKKKTTSFYECATQLGGFLFFIVSEVMMLAVMAYDRYVAICNPLLYMVVVSRRLCLLLVSLTYLYGFSTAIVVSPCIFSVSYCSSNIINHFYCDIAPLLALSCSDTYIPETIVFISAATNLVFSMITVLVSYFNIVLSILRIRSPEGRKKAFSTCASHMIAVTVFYGTMLFMYLQPQTNHSLDTDKMASVFYTLVIPMLNPLIYSLRNNDVNVALKKFMENPCYSFKSM.

Residues Met1–Ile25 are Extracellular-facing. N-linked (GlcNAc...) asparagine glycosylation occurs at Asn5. The chain crosses the membrane as a helical span at residues Pro26–Ile46. The Cytoplasmic segment spans residues Thr47–Arg54. The helical transmembrane segment at Leu55 to Thr75 threads the bilayer. Residues Val76–Thr99 lie on the Extracellular side of the membrane. Cys97 and Cys189 are disulfide-bonded. Residues Gln100 to Tyr120 traverse the membrane as a helical segment. The Cytoplasmic segment spans residues Asp121 to Arg139. A helical membrane pass occupies residues Leu140–Ser160. Topologically, residues Pro161–Thr197 are extracellular. Residues Ile198–Ser217 traverse the membrane as a helical segment. The Cytoplasmic segment spans residues Tyr218 to Ala237. Residues Phe238–Met258 traverse the membrane as a helical segment. Residues Tyr259–Asp271 are Extracellular-facing. Asn265 is a glycosylation site (N-linked (GlcNAc...) asparagine). The chain crosses the membrane as a helical span at residues Lys272–Leu292. The Cytoplasmic portion of the chain corresponds to Arg293–Met315.

The protein belongs to the G-protein coupled receptor 1 family.

It is found in the cell membrane. In terms of biological role, odorant receptor. The sequence is that of Olfactory receptor 8J3 (OR8J3) from Homo sapiens (Human).